Consider the following 176-residue polypeptide: Peptide methionine sulfoxide reductase MsrA (176 aa).

Cys-14 is an active-site residue.

It belongs to the MsrA Met sulfoxide reductase family.

It carries out the reaction L-methionyl-[protein] + [thioredoxin]-disulfide + H2O = L-methionyl-(S)-S-oxide-[protein] + [thioredoxin]-dithiol. The enzyme catalyses [thioredoxin]-disulfide + L-methionine + H2O = L-methionine (S)-S-oxide + [thioredoxin]-dithiol. Functionally, has an important function as a repair enzyme for proteins that have been inactivated by oxidation. Catalyzes the reversible oxidation-reduction of methionine sulfoxide in proteins to methionine. This Halalkalibacterium halodurans (strain ATCC BAA-125 / DSM 18197 / FERM 7344 / JCM 9153 / C-125) (Bacillus halodurans) protein is Peptide methionine sulfoxide reductase MsrA.